The sequence spans 454 residues: Histidine--tRNA ligase (454 aa).

The protein belongs to the class-II aminoacyl-tRNA synthetase family. Homodimer.

The protein localises to the cytoplasm. It catalyses the reaction tRNA(His) + L-histidine + ATP = L-histidyl-tRNA(His) + AMP + diphosphate + H(+). In Porphyromonas gingivalis (strain ATCC BAA-308 / W83), this protein is Histidine--tRNA ligase.